Consider the following 661-residue polypeptide: Bifunctional xylanase/xylan deacetylase (661 aa).

Residues 1–27 (MKLPTLGKCVVRTLMGAVALGAISVNA) form the signal peptide. The GH11 domain maps to 29–226 (TLSSNSTGTN…SRGSSDITVS (198 aa)). Glu-116 acts as the Nucleophile; for endoxylanase activity in catalysis. The active-site Proton donor; for endoxylanase activity is Glu-213. The tract at residues 220 to 259 (SSDITVSEGTSGGGTSSVGGASSSVNSSTGGGSSGGITVR) is disordered. Residues 237 to 247 (VGGASSSVNSS) are compositionally biased toward low complexity. A polysaccharide deacetylase region spans residues 394–577 (SNCSGYVGIT…AKGLCPGRID (184 aa)). One can recognise a NodB homology domain in the interval 398 to 574 (GYVGITFDDG…NLRAKGLCPG (177 aa)). The tract at residues 578-610 (PNTGRAVAPSSSGGSSSVALSSSSRSSSSAGGN) is disordered. A compositionally biased stretch (low complexity) spans 581-608 (GRAVAPSSSGGSSSVALSSSSRSSSSAG). Residues 616–645 (QCNWWGTFYPLCQTQTSGWGWENSRSCIST) form the CBM10 domain.

This sequence in the N-terminal section; belongs to the glycosyl hydrolase 11 (cellulase G) family.

The protein resides in the secreted. The catalysed reaction is Endohydrolysis of (1-&gt;4)-beta-D-xylosidic linkages in xylans.. The enzyme catalyses Deacetylation of xylans and xylo-oligosaccharides.. The protein operates within glycan degradation; xylan degradation. Its function is as follows. Endo-acting xylanase which specifically cleaves internal linkages on the xylan backbone, releasing xylooligosaccharides. Is able to hydrolyze oat spelt xylan and the arabinoxylans from wheat and rye, releasing xylobiose as the major product. Also likely catalyzes, via its C-terminal domain, the removal of acetyl groups from acetylated xylan. Thus, has the capability of hydrolyzing acetylated xylan. Does not attack mannan, galactan, arabinan or any cellulosic substrates. In Cellvibrio japonicus (Pseudomonas fluorescens subsp. cellulosa), this protein is Bifunctional xylanase/xylan deacetylase (xyn11A).